The following is a 645-amino-acid chain: Glucans biosynthesis glucosyltransferase H (645 aa).

The interval 1–28 (MDGTVTLSPAPTDLPPVSSLDAGQPTLP) is disordered. 7 helical membrane passes run 64–84 (LIGG…SVLW), 98–118 (LFVL…AGFI), 423–443 (APMW…GAGI), 465–485 (AIWI…LGYI), 504–524 (ALSI…VMYL), 558–578 (SYGG…LVSP), and 580–600 (LAAW…VVAV).

It belongs to the glycosyltransferase 2 family. OpgH subfamily.

It is found in the cell inner membrane. It participates in glycan metabolism; osmoregulated periplasmic glucan (OPG) biosynthesis. Its function is as follows. Involved in the biosynthesis of osmoregulated periplasmic glucans (OPGs). This chain is Glucans biosynthesis glucosyltransferase H, found in Xanthomonas campestris pv. campestris (strain B100).